Here is a 552-residue protein sequence, read N- to C-terminus: Cycloheximide resistance protein (552 aa).

Residues 46–70 (VLNSSDKSQSSENKEQTEGDQATIQ) are disordered. Residues 47–56 (LNSSDKSQSS) show a composition bias toward polar residues. 12 helical membrane-spanning segments follow: residues 100–120 (AIAA…SAIY), 137–157 (LATL…LFWS), 168–188 (TPLY…TALS), 194–213 (LSVL…STGG), 225–246 (YSIA…GPLI), 262–282 (WSFW…SFSL), 346–362 (IYIA…FESV), 381–399 (YVST…LPTV), 419–439 (LPPA…FGWT), 445–464 (NWFV…FIIF), 477–494 (VEYL…RSVS), and 518–539 (WGSS…FFYL).

It belongs to the major facilitator superfamily. CAR1 family.

The protein resides in the membrane. Functionally, probable transporter. Confers resistance to cycloheximide. This Candida maltosa (Yeast) protein is Cycloheximide resistance protein (CYHR).